A 250-amino-acid chain; its full sequence is Probable S-methyl-5'-thioinosine phosphorylase (250 aa).

Phosphate is bound by residues Thr-14 and 56–57; that span reads RH. Met-189 is a binding site for substrate. Thr-190 serves as a coordination point for phosphate. Position 213-215 (213-215) interacts with substrate; it reads NWA.

The protein belongs to the PNP/MTAP phosphorylase family. MTAP subfamily. In terms of assembly, homotrimer.

It catalyses the reaction S-methyl-5'-thioinosine + phosphate = 5-(methylsulfanyl)-alpha-D-ribose 1-phosphate + hypoxanthine. Its pathway is purine metabolism; purine nucleoside salvage. Functionally, catalyzes the reversible phosphorylation of S-methyl-5'-thioinosine (MTI) to hypoxanthine and 5-methylthioribose-1-phosphate. Involved in the breakdown of S-methyl-5'-thioadenosine (MTA), a major by-product of polyamine biosynthesis. Catabolism of (MTA) occurs via deamination to MTI and phosphorolysis to hypoxanthine. The polypeptide is Probable S-methyl-5'-thioinosine phosphorylase (Xanthomonas campestris pv. campestris (strain ATCC 33913 / DSM 3586 / NCPPB 528 / LMG 568 / P 25)).